Here is a 293-residue protein sequence, read N- to C-terminus: Glutamine sensor pib2 (293 aa).

Positions 38-75 are disordered; that stretch reads APTRQATNGTGSVSGSPNSSSNSTPANQGSLPSHTNPQ. A compositionally biased stretch (low complexity) spans 44-62; it reads TNGTGSVSGSPNSSSNSTP. Over residues 63 to 75 the composition is skewed to polar residues; the sequence is ANQGSLPSHTNPQ. The FYVE-type; degenerate zinc finger occupies 156-220; that stretch reads DVSVCSFPSC…SCVSCFYEYL (65 aa). Zn(2+)-binding residues include Cys-178, Cys-181, Cys-212, and Cys-215. Residues 242–256 show a composition bias toward polar residues; that stretch reads APQQATTHPPSQPKN. The tract at residues 242–276 is disordered; it reads APQQATTHPPSQPKNAVSVPIPKMDSTDSKGELPS. At Ser-259 the chain carries Phosphoserine.

In terms of assembly, interacts with the TORC1 complex when activated by glutamine or cysteine.

The protein localises to the vacuole membrane. Activated by glutamine. Functionally, functions as an intracellular glutamine sensor that directly activates the TORC1 signaling pathway, to promote cell growth when glutamine is available. This Schizosaccharomyces pombe (strain 972 / ATCC 24843) (Fission yeast) protein is Glutamine sensor pib2.